We begin with the raw amino-acid sequence, 338 residues long: Homoserine kinase (338 aa).

This sequence belongs to the GHMP kinase family. Homoserine kinase subfamily.

The catalysed reaction is L-homoserine + ATP = O-phospho-L-homoserine + ADP + H(+). It participates in amino-acid biosynthesis; L-threonine biosynthesis; L-threonine from L-aspartate: step 4/5. Its function is as follows. Commits homoserine to the threonine biosynthesis pathway by catalyzing its O-phosphorylation. The protein is Homoserine kinase of Schizosaccharomyces pombe (strain 972 / ATCC 24843) (Fission yeast).